The primary structure comprises 87 residues: Small ribosomal subunit protein bS18 (87 aa).

Belongs to the bacterial ribosomal protein bS18 family. In terms of assembly, part of the 30S ribosomal subunit. Forms a tight heterodimer with protein bS6.

Functionally, binds as a heterodimer with protein bS6 to the central domain of the 16S rRNA, where it helps stabilize the platform of the 30S subunit. This is Small ribosomal subunit protein bS18 from Nitratidesulfovibrio vulgaris (strain DSM 19637 / Miyazaki F) (Desulfovibrio vulgaris).